We begin with the raw amino-acid sequence, 449 residues long: Protein translocase subunit SecD (449 aa).

Transmembrane regions (helical) follow at residues 6 to 26 (GLVF…VLPT), 272 to 292 (LAVK…IAFY), 294 to 314 (LPGL…LALF), 317 to 337 (VPVT…GMAV), 379 to 399 (TFIA…GAPV), and 401 to 421 (GFAV…IFVT).

This sequence belongs to the SecD/SecF family. SecD subfamily. As to quaternary structure, forms a complex with SecF. Part of the essential Sec protein translocation apparatus which comprises SecA, SecYEG and auxiliary proteins SecDF. Other proteins may also be involved.

The protein localises to the cell membrane. Functionally, part of the Sec protein translocase complex. Interacts with the SecYEG preprotein conducting channel. SecDF uses the proton motive force (PMF) to complete protein translocation after the ATP-dependent function of SecA. This Dehalococcoides mccartyi (strain VS) protein is Protein translocase subunit SecD.